The following is a 467-amino-acid chain: Gamma-aminobutyric acid receptor subunit gamma-3 (467 aa).

A signal peptide spans 1–17 (MAAKLLLLLCLFSGLHA). Residues 18–256 (RSRRVEEDDS…FELSRRMGYF (239 aa)) are Extracellular-facing. A glycan (N-linked (GlcNAc...) asparagine) is linked at Asn110. A disulfide bridge links Cys171 with Cys185. An N-linked (GlcNAc...) asparagine glycan is attached at Asn228. A helical membrane pass occupies residues 257 to 277 (TIQTYIPCILTVVLSWVSFWI). Residues 278-283 (KKDATP) are Cytoplasmic-facing. Residues 284–303 (ARTTLGITTVLTMTTLSTIA) form a helical membrane-spanning segment. The Extracellular portion of the chain corresponds to 304–311 (RKSLPRVS). A helical membrane pass occupies residues 312–332 (YVTAMDLFVTVCFLFVFAALM). At 333–446 (EYATLNYYSS…DVSELDSYSR (114 aa)) the chain is on the cytoplasmic side. The chain crosses the membrane as a helical span at residues 447 to 467 (VFFPTSFLLFNLVYWVGYLYL).

The protein belongs to the ligand-gated ion channel (TC 1.A.9) family. Gamma-aminobutyric acid receptor (TC 1.A.9.5) subfamily. GABRG3 sub-subfamily. As to quaternary structure, heteropentamer, formed by a combination of alpha (GABRA1-6), beta (GABRB1-3), gamma (GABRG1-3), delta (GABRD), epsilon (GABRE), rho (GABRR1-3), pi (GABRP) and theta (GABRQ) chains, each subunit exhibiting distinct physiological and pharmacological properties. In terms of processing, may be palmitoylated. Expressed in brain.

Its subcellular location is the postsynaptic cell membrane. The protein localises to the cell membrane. It catalyses the reaction chloride(in) = chloride(out). Allosterically potentiated by alphaxalone. Allosterically inhibited by pregnenolone sulfate. Inhibited by zinc and lanthanum. Gamma subunit of the heteropentameric ligand-gated chloride channel gated by gamma-aminobutyric acid (GABA), a major inhibitory neurotransmitter in the brain. GABA-gated chloride channels, also named GABA(A) receptors (GABAAR), consist of five subunits arranged around a central pore and contain GABA active binding site(s) located at the alpha and beta subunit interface(s). When activated by GABA, GABAARs selectively allow the flow of chloride across the cell membrane down their electrochemical gradient. The polypeptide is Gamma-aminobutyric acid receptor subunit gamma-3 (Rattus norvegicus (Rat)).